The sequence spans 333 residues: Protein pelota homolog (333 aa).

This sequence belongs to the eukaryotic release factor 1 family. Pelota subfamily. As to quaternary structure, monomer. Requires a divalent metal cation as cofactor.

It localises to the cytoplasm. Functionally, may function in recognizing stalled ribosomes, interact with stem-loop structures in stalled mRNA molecules, and effect endonucleolytic cleavage of the mRNA. May play a role in the release non-functional ribosomes and degradation of damaged mRNAs. Has endoribonuclease activity. The sequence is that of Protein pelota homolog from Pyrobaculum arsenaticum (strain DSM 13514 / JCM 11321 / PZ6).